Reading from the N-terminus, the 60-residue chain is MAVQQNKKSPSKRGMHRSHNALTVPGIAVEPTTGETHMRHHISPNGFYRGRQVLKNKSEA.

Positions 1–60 (MAVQQNKKSPSKRGMHRSHNALTVPGIAVEPTTGETHMRHHISPNGFYRGRQVLKNKSEA) are disordered. Basic residues predominate over residues 9–19 (SPSKRGMHRSH).

The protein belongs to the bacterial ribosomal protein bL32 family.

The polypeptide is Large ribosomal subunit protein bL32 (Acidovorax ebreus (strain TPSY) (Diaphorobacter sp. (strain TPSY))).